Consider the following 219-residue polypeptide: Transmembrane emp24 domain-containing protein 10 (219 aa).

The signal sequence occupies residues 1 to 31 (MSGLSGPLSWPGPLLSALLFLFLLGPSSVLG). Positions 1–142 (MSGLSGPLSW…KNYEEIAKVE (142 aa)) are required for interaction with STX17. Residues 32–185 (ISFHLPVNSR…RDTNESTNTR (154 aa)) lie on the Lumenal side of the membrane. Residues 41 to 193 (RKCLREEIHK…TRVLYFSIFS (153 aa)) enclose the GOLD domain. Positions 147-178 (LEVELRRLEDLSESIVNDFAYMKKREEEMRDT) are required for TMED10 and TMED2 cis-Golgi network localization. A dimethylated arginine mark is found at R171 and R176. N179 is a glycosylation site (N-linked (GlcNAc...) asparagine). Residues 186–206 (VLYFSIFSMFCLIGLATWQVF) form a helical membrane-spanning segment. The interval 204-219 (QVFYLRRFFKAKKLIE) is interaction with COPG1. Over 207–219 (YLRRFFKAKKLIE) the chain is Cytoplasmic. The tract at residues 207 to 219 (YLRRFFKAKKLIE) is interaction with ARF1 and IL1B. Positions 211–212 (FF) match the COPII vesicle coat-binding motif. The COPI vesicle coat-binding motif lies at 211–219 (FFKAKKLIE).

The protein belongs to the EMP24/GP25L family. As to quaternary structure, predominantly dimeric and to a lesser extent monomeric in the ER. Monomer and dimer in ERGIC and cis-Golgi network. Forms homooligomer (via GOLD domain); the assembly is promoted by direct binding with leaderless cargos and may form a protein channel that facilitates cargo entry into the ERGIC. Forms heterooligomeric complexes with other members of the p24 family such as TMED2, TMED7 and TMED9. Interacts (via GOLD domain) with TMED2 (via GOLD domain); the complex is required for export of TMED10 from the ER to the cis-Golgi network; the complex is proposed to be involved in cis-Golgi network dynamics and / or biogenesis. Associates with the COPI vesicle coat subunits (coatomer). Tetramerization of the cytoplasmic domain at the Golgi membrane in vitro; the complex is proposed to interact with COPI coatomer and induce budding of the vesicles. Interacts with COPG1; the interaction involves TMED10 homodimer. Interacts with ARF1 (GDP-bound); the interaction probably involves a TMED10 oligomer. Interacts with SEC23A, SEC24B, SEC24C and SEC24D components of the coat protein complex II/COPII, indicative of an association of TMED10 with the COPII vesicle coat. Interacts with CD59. Interacts with MPPE1/PGAP5; the complex might recruit and sort GPI-anchored proteins to the ER-exit site, or the interaction might lead to recycling of PGAP5 between the ER and the Golgi. Interacts with F2LR1/PAR2. Interacts with KDELR2/ERD2; the interaction is disrupted by KDELR2 ligand. Found in a complex composed at least of SURF4, TMED2 and TMED10. Associates with the presenilin-dependent gamma-secretase complex. Interacts with STX17; the interaction is direct. Interacts with IL-1; the interaction is direct. Interacts with RAB21 (active GTP-bound form); the interaction is indirect and regulates TMED10 abundance and localization at the Golgi. Ubiquitous.

The protein localises to the endoplasmic reticulum membrane. Its subcellular location is the endoplasmic reticulum-Golgi intermediate compartment membrane. It is found in the golgi apparatus membrane. The protein resides in the golgi apparatus. It localises to the cis-Golgi network membrane. The protein localises to the trans-Golgi network membrane. Its subcellular location is the cytoplasmic vesicle. It is found in the secretory vesicle membrane. The protein resides in the cell membrane. It localises to the melanosome. Functionally, cargo receptor involved in protein vesicular trafficking and quality control in the endoplasmic reticulum (ER) and Golgi. The p24 protein family is a group of transmembrane proteins that bind coat protein complex I/COPI and coat protein complex II/COPII involved in vesicular trafficking between the membranes. Acts at the lumenal side for incorporation of secretory cargo molecules into transport vesicles and involved in vesicle coat formation at the cytoplasmic side. Mainly functions in the early secretory pathway and cycles between the ER, ER-Golgi intermediate compartment (ERGIC) and Golgi, mediating cargo transport through COPI and COPII-coated vesicles. In COPII vesicle-mediated anterograde transport, involved in the transport of GPI-anchored proteins by acting together with TMED2 as their cargo receptor; the function specifically implies SEC24C and SEC24D of the COPII vesicle coat and lipid raft-like microdomains of the ER. Recognizes GPI anchors structural remodeled in the ER by the GPI inositol-deacylase/PGAP1 and the metallophosphoesterase MPPE1/PGAP5. In COPI vesicle-mediated retrograde transport, involved in the biogenesis of COPI vesicles and vesicle coat recruitment. Involved in trafficking of amyloid beta A4 protein and soluble APP-beta release (independent from the modulation of gamma-secretase activity). Involved in the KDELR2-mediated retrograde transport of the toxin A subunit (CTX-A-K63)together with COPI and the COOH terminus of KDELR2. On Golgi membranes, acts as a primary receptor for ARF1-GDP, a GTP-binding protein involved in COPI-vesicle formation. Increases coatomer-dependent GTPase-activating activity of ARFGAP2 which mediates the hydrolysis of ARF1-bound GTP and therefore modulates protein trafficking from the Golgi apparatus. Involved in the exocytic trafficking of G protein-coupled receptors F2LR1/PAR2 (trypsin and tryspin-like enzyme receptor), OPRM1 (opioid receptor) and P2RY4 (UTD and UDP receptor) from the Golgi to the plasma membrane, thus contributing to receptor resensitization. In addition to its cargo receptor activity, may also act as a protein channel after oligomerization, facilitating the post-translational entry of leaderless cytoplasmic cargo into the ERGIC. Involved in the translocation into ERGIC, the vesicle entry and the secretion of leaderless cargos (lacking the secretion signal sequence), including the mature form of interleukin 1/IL-1 family members, the alpha-crystallin B chain HSPB5, the carbohydrate-binding proteins galectin-1/LGALS1 and galectin-3/LGALS3, the microtubule-associated protein Tau/MAPT, and the annexin A1/ANXA1; the translocation process is dependent on cargo protein unfolding and enhanced by chaperones HSP90AB1 and HSP90B1/GRP9. Could also associates with the presenilin-dependent gamma-secretase complex in order to regulate gamma-cleavages of the amyloid beta A4 protein to yield amyloid-beta 40/Abeta40. This Rattus norvegicus (Rat) protein is Transmembrane emp24 domain-containing protein 10.